The following is a 363-amino-acid chain: Chorismate synthase (363 aa).

Arg48 and Arg54 together coordinate NADP(+). Residues 125–127 (RSS), 238–239 (NA), Gly278, 293–297 (KPTSS), and Arg319 contribute to the FMN site.

Belongs to the chorismate synthase family. As to quaternary structure, homotetramer. FMNH2 is required as a cofactor.

The catalysed reaction is 5-O-(1-carboxyvinyl)-3-phosphoshikimate = chorismate + phosphate. Its pathway is metabolic intermediate biosynthesis; chorismate biosynthesis; chorismate from D-erythrose 4-phosphate and phosphoenolpyruvate: step 7/7. In terms of biological role, catalyzes the anti-1,4-elimination of the C-3 phosphate and the C-6 proR hydrogen from 5-enolpyruvylshikimate-3-phosphate (EPSP) to yield chorismate, which is the branch point compound that serves as the starting substrate for the three terminal pathways of aromatic amino acid biosynthesis. This reaction introduces a second double bond into the aromatic ring system. This is Chorismate synthase from Alcanivorax borkumensis (strain ATCC 700651 / DSM 11573 / NCIMB 13689 / SK2).